The primary structure comprises 315 residues: PIH1 domain-containing protein 2 (315 aa).

It belongs to the PIH1 family.

In Bos taurus (Bovine), this protein is PIH1 domain-containing protein 2 (PIH1D2).